Here is a 149-residue protein sequence, read N- to C-terminus: Arginine repressor (149 aa).

Belongs to the ArgR family.

The protein localises to the cytoplasm. It functions in the pathway amino-acid biosynthesis; L-arginine biosynthesis [regulation]. In terms of biological role, regulates arginine biosynthesis genes. The polypeptide is Arginine repressor (Bacillus velezensis (strain DSM 23117 / BGSC 10A6 / LMG 26770 / FZB42) (Bacillus amyloliquefaciens subsp. plantarum)).